A 258-amino-acid chain; its full sequence is UPF0758 protein Bcep1808_2579 (258 aa).

An MPN domain is found at 136-258 (PIDSPGAVED…TFSFARAGWL (123 aa)). Residues histidine 207, histidine 209, and aspartate 220 each contribute to the Zn(2+) site. The JAMM motif motif lies at 207 to 220 (HNHPSGAVQPSAED).

It belongs to the UPF0758 family.

This chain is UPF0758 protein Bcep1808_2579, found in Burkholderia vietnamiensis (strain G4 / LMG 22486) (Burkholderia cepacia (strain R1808)).